A 509-amino-acid polypeptide reads, in one-letter code: Bifunctional purine biosynthesis protein PurH (509 aa).

The 144-residue stretch at M1–V144 folds into the MGS-like domain.

Belongs to the PurH family.

It catalyses the reaction (6R)-10-formyltetrahydrofolate + 5-amino-1-(5-phospho-beta-D-ribosyl)imidazole-4-carboxamide = 5-formamido-1-(5-phospho-D-ribosyl)imidazole-4-carboxamide + (6S)-5,6,7,8-tetrahydrofolate. The enzyme catalyses IMP + H2O = 5-formamido-1-(5-phospho-D-ribosyl)imidazole-4-carboxamide. Its pathway is purine metabolism; IMP biosynthesis via de novo pathway; 5-formamido-1-(5-phospho-D-ribosyl)imidazole-4-carboxamide from 5-amino-1-(5-phospho-D-ribosyl)imidazole-4-carboxamide (10-formyl THF route): step 1/1. It participates in purine metabolism; IMP biosynthesis via de novo pathway; IMP from 5-formamido-1-(5-phospho-D-ribosyl)imidazole-4-carboxamide: step 1/1. This chain is Bifunctional purine biosynthesis protein PurH, found in Listeria welshimeri serovar 6b (strain ATCC 35897 / DSM 20650 / CCUG 15529 / CIP 8149 / NCTC 11857 / SLCC 5334 / V8).